The sequence spans 135 residues: Salivary protein 15 (135 aa).

Positions 1 to 21 (MESFVAMKVVCILFLVGVVAA) are cleaved as a signal peptide. Residue Asn22 is glycosylated (N-linked (GlcNAc...) asparagine). The segment at 48–67 (PNYISNHQKLALKLLKICKD) is required for Borrelia OspC-binding. 2 N-linked (GlcNAc...) asparagine glycosylation sites follow: Asn92 and Asn104. Residues 116-135 (GPNGQTCAEKNKCVGHIPGC) form a CD4-binding region.

This sequence belongs to the salp15 family. Monomer. Interacts with host CD4. Interacts with host DC-SIGN (CD209). In terms of assembly, (Microbial infection) Interacts with Borrelia outer surface protein C (OspC). Post-translationally, glycosylated. As to expression, expressed in salivary glands. Detected in host skin, at the site of natural inoculation.

It is found in the secreted. Functionally, salivary tick protein that downregulates host immune system by binding to both dendritic cells, and CD4(+) T cells. Specifically binds to the CD4 coreceptor on T cells. This interaction prevents the activation of the Src kinase, Lck, and its downstream substrate Zap-70, and results in deficient activation of PLCgamma1, the repression of calcium fluxes triggered by T-cell antigen receptor (TCR) ligation, and a subsequent reduction in interleukin-2 production. This salivary protein also binds to DC-SIGN (CD209) on dendritic cells (DC) and activates the Raf-1 kinase/MEK signaling pathway that results in down-regulating expression of pro-inflammatory cytokines. Furthermore, it inhibits T cell proliferation induced by DCs. It also inhibits in vitro keratinocyte inflammation induced by Borrelia burgdorferi or by the major outer surface protein (OspC) of Borrelia. In addition, it downregulates chemokines and monocyte chemoattractant protein 1, as well as several antimicrobial peptides such as defensins, cathelicidin, psoriasin, and RNase 7. Apart from its immunomodulatory activities, it is also associated with protection of Borrelia spirochetes from antibody-mediated killing through its binding to OspC. In vivo, tests on different immune disease animal models show promising therapeutic results, e.g., in inhibiting HIV infection, experimental autoimmune encephalomyelitis, transplantation rejection, and asthma. In terms of biological role, (Microbial infection) Protects Borrelia garinii (strains A87S and VSBP) from host complement-mediated killing. Its function is as follows. (Microbial infection) Partially protects Borrelia burgdorferi (strains VS215 and B31) from host complement-mediated killing. The polypeptide is Salivary protein 15 (Ixodes scapularis (Black-legged tick)).